The chain runs to 105 residues: Putative membrane protein insertion efficiency factor (105 aa).

This sequence belongs to the UPF0161 family.

Its subcellular location is the cell membrane. Functionally, could be involved in insertion of integral membrane proteins into the membrane. The polypeptide is Putative membrane protein insertion efficiency factor (Bifidobacterium longum (strain NCC 2705)).